A 354-amino-acid polypeptide reads, in one-letter code: MPDAKGRRIALGCEGSANKLGIGIIAHDPITGEALVLSNVRDTFVSPPGTGFLPKDTARHHRAYFVRVAKKALALSGVSISEIDCICYTKGPGMGGPLTSVAVGARTLALLWGKELVGVNHCVGHIEMGRAITGASNPVVLYVSGGNTQVIAYAEQRYRIFGETLDIAVGNCLDRFARTLEISNDPAPGYNIEQLAKQGGRVLLDLPYAVKGMDCSFSGILGRADDLAAQMKAGEPGPDGEPFTPADLCFSLQETVFAMLVEITERAMAHVGSNQVLIVGGVGCNERLQEMMGAMAAERGGSVYATDERFCIDNGIMIAHAGLLAYETGFRTPLDESTCTQRFRTDEVFVKWRD.

A divalent metal cation contacts are provided by His-121, His-125, and Tyr-142. Substrate-binding positions include 142 to 146 (YVSGG), Asp-174, Gly-189, Glu-193, and Asn-285. Asp-313 provides a ligand contact to a divalent metal cation.

It belongs to the KAE1 / TsaD family. As to quaternary structure, component of the EKC/KEOPS complex composed of at least bud32, cgi121, gon7, kae1 and pcc1; the whole complex dimerizes. Requires a divalent metal cation as cofactor.

It is found in the cytoplasm. The protein resides in the nucleus. The catalysed reaction is L-threonylcarbamoyladenylate + adenosine(37) in tRNA = N(6)-L-threonylcarbamoyladenosine(37) in tRNA + AMP + H(+). Its function is as follows. Component of the EKC/KEOPS complex that is required for the formation of a threonylcarbamoyl group on adenosine at position 37 (t(6)A37) in tRNAs that read codons beginning with adenine. The complex is probably involved in the transfer of the threonylcarbamoyl moiety of threonylcarbamoyl-AMP (TC-AMP) to the N6 group of A37. Kae1 likely plays a direct catalytic role in this reaction, but requires other protein(s) of the complex to fulfill this activity. The EKC/KEOPS complex also promotes both telomere uncapping and telomere elongation. The complex is required for efficient recruitment of transcriptional coactivators. The polypeptide is tRNA N6-adenosine threonylcarbamoyltransferase (gpe-1) (Neurospora crassa (strain ATCC 24698 / 74-OR23-1A / CBS 708.71 / DSM 1257 / FGSC 987)).